The following is a 425-amino-acid chain: SWI/SNF and RSC complexes subunit ssr3 (425 aa).

Over residues 1–16 (MSNNSRLPENGVQSGN) the composition is skewed to polar residues. The tract at residues 1–23 (MSNNSRLPENGVQSGNGEDAELK) is disordered. Residues 201-278 (EHPERYKLSK…PELMNRFLEP (78 aa)) enclose the SWIB/MDM2 domain.

Belongs to the SMARCD family. As to quaternary structure, component of the RSC complex composed of at least arp9, arp42, rsc1, rsc4, rsc7, rsc9, rsc58, sfh1, snf21, ssr1, ssr2, ssr3 and ssr4. The complex interacts with histone and histone variant components of centromeric chromatin. Component of the SWI/SNF global transcription activator complex composed of at least arp9, arp42, snf5, snf22, snf30, sbf59, sol1, ssr1, ssr2, ssr3, ssr4 and tfg3.

It is found in the cytoplasm. Its subcellular location is the nucleus. In terms of biological role, component of the chromatin structure remodeling complex (RSC), which is involved in transcription regulation and nucleosome positioning. Controls particularly membrane and organelle development genes. Part of the SWI/SNF complex, an ATP-dependent chromatin remodeling complex, required for the positive and negative regulation of gene expression of a large number of genes. It changes chromatin structure by altering DNA-histone contacts within a nucleosome, leading eventually to a change in nucleosome position, thus facilitating or repressing binding of gene-specific transcription factors. This is SWI/SNF and RSC complexes subunit ssr3 (ssr3) from Schizosaccharomyces pombe (strain 972 / ATCC 24843) (Fission yeast).